Here is a 311-residue protein sequence, read N- to C-terminus: tRNA dimethylallyltransferase (311 aa).

Position 13 to 20 (13 to 20 (GPTASGKT)) interacts with ATP. Residue 15–20 (TASGKT) coordinates substrate. Interaction with substrate tRNA stretches follow at residues 38-41 (DSMQ) and 166-170 (QRVLR).

The protein belongs to the IPP transferase family. Monomer. Mg(2+) serves as cofactor.

It carries out the reaction adenosine(37) in tRNA + dimethylallyl diphosphate = N(6)-dimethylallyladenosine(37) in tRNA + diphosphate. In terms of biological role, catalyzes the transfer of a dimethylallyl group onto the adenine at position 37 in tRNAs that read codons beginning with uridine, leading to the formation of N6-(dimethylallyl)adenosine (i(6)A). In Staphylococcus aureus (strain bovine RF122 / ET3-1), this protein is tRNA dimethylallyltransferase.